The following is a 164-amino-acid chain: MKEFLAVGEIINTHGIKGEVKVYPLTDDMKRFKKLKEVFIDGEGRKILSCKLQPNNVVLKIEGIDSIEEANKYRKKLLEIKRENSVKLPKGSYFIADLIECRVIDENGREIGQISDVIKTGSNDVYEVKGKSEVLVPAIKDIVTNIDIENKTVTIKPLEIWQCE.

The PRC barrel domain maps to 90-161; it reads KGSYFIADLI…TVTIKPLEIW (72 aa).

It belongs to the RimM family. In terms of assembly, binds ribosomal protein uS19.

It localises to the cytoplasm. In terms of biological role, an accessory protein needed during the final step in the assembly of 30S ribosomal subunit, possibly for assembly of the head region. Essential for efficient processing of 16S rRNA. May be needed both before and after RbfA during the maturation of 16S rRNA. It has affinity for free ribosomal 30S subunits but not for 70S ribosomes. This is Ribosome maturation factor RimM from Clostridium botulinum (strain Langeland / NCTC 10281 / Type F).